Reading from the N-terminus, the 114-residue chain is MPRSVNHVASRAKRKRILKLTRGYYGARKNVWTVAKNTWEKGLTYAFRDRRNKKRNFRALWIQRINAAARMEGLSYSRLMGALHAAGIEINRKVLADLAVNHPEAFKAIVAKVK.

The protein belongs to the bacterial ribosomal protein bL20 family.

Its function is as follows. Binds directly to 23S ribosomal RNA and is necessary for the in vitro assembly process of the 50S ribosomal subunit. It is not involved in the protein synthesizing functions of that subunit. This Parabacteroides distasonis (strain ATCC 8503 / DSM 20701 / CIP 104284 / JCM 5825 / NCTC 11152) protein is Large ribosomal subunit protein bL20.